Here is a 376-residue protein sequence, read N- to C-terminus: Erythronate-4-phosphate dehydrogenase (376 aa).

Substrate-binding residues include serine 45 and threonine 67. Aspartate 147 serves as a coordination point for NAD(+). Residue arginine 209 is part of the active site. Aspartate 233 serves as a coordination point for NAD(+). Glutamate 238 is an active-site residue. The active-site Proton donor is histidine 255. Glycine 258 lines the NAD(+) pocket. Residue tyrosine 259 participates in substrate binding.

The protein belongs to the D-isomer specific 2-hydroxyacid dehydrogenase family. PdxB subfamily. As to quaternary structure, homodimer.

Its subcellular location is the cytoplasm. The enzyme catalyses 4-phospho-D-erythronate + NAD(+) = (R)-3-hydroxy-2-oxo-4-phosphooxybutanoate + NADH + H(+). The protein operates within cofactor biosynthesis; pyridoxine 5'-phosphate biosynthesis; pyridoxine 5'-phosphate from D-erythrose 4-phosphate: step 2/5. Functionally, catalyzes the oxidation of erythronate-4-phosphate to 3-hydroxy-2-oxo-4-phosphonooxybutanoate. This chain is Erythronate-4-phosphate dehydrogenase, found in Shewanella sp. (strain MR-4).